A 531-amino-acid chain; its full sequence is Peptide chain release factor 3 (531 aa).

One can recognise a tr-type G domain in the interval 10–278; the sequence is RRRRTFAIIS…SLIDWAPAPK (269 aa). Residues 19–26, 87–91, and 141–144 each bind GTP; these read SHPDAGKT, DTPGH, and NKYD.

This sequence belongs to the TRAFAC class translation factor GTPase superfamily. Classic translation factor GTPase family. PrfC subfamily.

The protein localises to the cytoplasm. Functionally, increases the formation of ribosomal termination complexes and stimulates activities of RF-1 and RF-2. It binds guanine nucleotides and has strong preference for UGA stop codons. It may interact directly with the ribosome. The stimulation of RF-1 and RF-2 is significantly reduced by GTP and GDP, but not by GMP. The protein is Peptide chain release factor 3 of Neisseria gonorrhoeae (strain NCCP11945).